The primary structure comprises 616 residues: Chaperone protein HscA homolog (616 aa).

The protein belongs to the heat shock protein 70 family.

Chaperone involved in the maturation of iron-sulfur cluster-containing proteins. Has a low intrinsic ATPase activity which is markedly stimulated by HscB. The chain is Chaperone protein HscA homolog from Tolumonas auensis (strain DSM 9187 / NBRC 110442 / TA 4).